The sequence spans 556 residues: Potassium-transporting ATPase potassium-binding subunit (556 aa).

The next 10 helical transmembrane spans lie at 1–21, 60–80, 130–150, 173–193, 245–265, 281–301, 374–394, 416–436, 482–502, and 529–549; these read MTWICFLAGLALLAIALGIAQ, SYARAVLAFSFCGVVFLYALQ, GLCVQNFVSAATGIAIAVALI, LRILMPIAAVAAFLLIAGGAV, PQPWTNMLEIFLILLIPFSLP, ILAAMVVLFTVNLCAMAAAEF, GLYGMLVIAVIAVFIAGLLVG, ILVMPTLVLCGVALSLAVPGL, AALGAAMLLGRFVPIILILAL, and LIVFTAILVTALVFFPVLTLG.

Belongs to the KdpA family. In terms of assembly, the system is composed of three essential subunits: KdpA, KdpB and KdpC.

It is found in the cell membrane. In terms of biological role, part of the high-affinity ATP-driven potassium transport (or Kdp) system, which catalyzes the hydrolysis of ATP coupled with the electrogenic transport of potassium into the cytoplasm. This subunit binds the extracellular potassium ions and delivers the ions to the membrane domain of KdpB through an intramembrane tunnel. This chain is Potassium-transporting ATPase potassium-binding subunit, found in Cutibacterium acnes (strain DSM 16379 / KPA171202) (Propionibacterium acnes).